A 553-amino-acid polypeptide reads, in one-letter code: MEPIWELVEPWGLGLDDLQYFGEYTAKVKQHAIERLREQAENREQNLVLVTGMTPTPKGEGKTVTTVGLGQTLNHVGEEAMIAIREPSLGPVFGVKGGAAGGGRSQVLPMEDINLHFTGDLHALTSAHNLIAAMLDAKISQGDDLNIDINNVSWPRAIDMNDRALRETVVGLGGKTGGTPREDSFILTAASELMAVLCLASDIGDLKERVSRIIVAYDEDGDPVTVEDIEATGPATMLLRDAIKPNVVQTIEGTPALVHGGPFANIAHGTNSLVADKTAFGMGDYLVTEAGFGSDLGAEKFMDVVCRKGDMTPNAVVLVASVRALKYHGLNQWPVDYDEIGEAGVEAVEAGFSNLDKHARNLQKFGVPVVVSVNRFPDDTDEEVQAVLDHCREDLGVRAAESNVFSDGSEGGVDLAENVIEATEESNEEDFRMLYDDDDSIKEKIHTVATEIYGADDVKYTGGALDDIEQMNDLDFDDYPVVMSKTFHSLSDDASQKGAPEGWELEISEVYPSAGAGFLVALTADALTMPGLPARPAAADMDIDGDGNISGLF.

56–63 (TPKGEGKT) serves as a coordination point for ATP.

The protein belongs to the formate--tetrahydrofolate ligase family.

The enzyme catalyses (6S)-5,6,7,8-tetrahydrofolate + formate + ATP = (6R)-10-formyltetrahydrofolate + ADP + phosphate. Its pathway is one-carbon metabolism; tetrahydrofolate interconversion. In Haloarcula marismortui (strain ATCC 43049 / DSM 3752 / JCM 8966 / VKM B-1809) (Halobacterium marismortui), this protein is Formate--tetrahydrofolate ligase.